The following is a 337-amino-acid chain: UDP-3-O-acylglucosamine N-acyltransferase (337 aa).

His-238 acts as the Proton acceptor in catalysis.

This sequence belongs to the transferase hexapeptide repeat family. LpxD subfamily. Homotrimer.

It catalyses the reaction a UDP-3-O-[(3R)-3-hydroxyacyl]-alpha-D-glucosamine + a (3R)-hydroxyacyl-[ACP] = a UDP-2-N,3-O-bis[(3R)-3-hydroxyacyl]-alpha-D-glucosamine + holo-[ACP] + H(+). Its pathway is bacterial outer membrane biogenesis; LPS lipid A biosynthesis. Functionally, catalyzes the N-acylation of UDP-3-O-acylglucosamine using 3-hydroxyacyl-ACP as the acyl donor. Is involved in the biosynthesis of lipid A, a phosphorylated glycolipid that anchors the lipopolysaccharide to the outer membrane of the cell. In Xanthomonas oryzae pv. oryzae (strain MAFF 311018), this protein is UDP-3-O-acylglucosamine N-acyltransferase.